We begin with the raw amino-acid sequence, 1872 residues long: Plexin-A3 (1872 aa).

Residues 1–19 form the signal peptide; the sequence is MPTVCLLPLLFFTIGGCLG. Residues 20–489 enclose the Sema domain; it reads SSRPFRTFVV…SEKQVSQLPV (470 aa). The Extracellular portion of the chain corresponds to 20 to 1220; that stretch reads SSRPFRTFVV…ITADRALTLP (1201 aa). N-linked (GlcNAc...) asparagine glycosylation is present at Asn60. 9 disulfides stabilise this stretch: Cys78–Cys87, Cys113–Cys121, Cys267–Cys388, Cys283–Cys339, Cys357–Cys376, Cys492–Cys509, Cys498–Cys540, Cys501–Cys518, and Cys512–Cys524. The N-linked (GlcNAc...) asparagine glycan is linked to Asn549. A disulfide bridge connects residues Cys575 and Cys595. 4 consecutive IPT/TIG domains span residues 841–934, 936–1021, 1024–1123, and 1126–1212; these read PRIT…YSFV, PTFD…YTYT, PTVT…FTYY, and PSFE…LHIT. A glycan (N-linked (GlcNAc...) asparagine) is linked at Asn1163. Residues 1221–1241 form a helical membrane-spanning segment; the sequence is AMVGLAAGGGLLLLAITVVLV. Positions 1240-1294 form a coiled coil; it reads LVAYKRKTQDADRTLKRLQLQMDNLESRVALECKEAFAELQTDINELTNHMDGVQ. Topologically, residues 1242 to 1872 are cytoplasmic; the sequence is AYKRKTQDAD…QIITLVSSSS (631 aa). At Ser1597 the chain carries Phosphoserine.

It belongs to the plexin family. As to expression, detected in embryonic hindbrain, spinal cord, dorsal root ganglion, trigeminal ganglion and superior cervical ganglion. In newborns, detected throughout all layers of the hippocampus.

The protein resides in the cell membrane. Functionally, coreceptor for SEMA3A and SEMA3F. Necessary for signaling by class 3 semaphorins and subsequent remodeling of the cytoskeleton. Plays a role in axon guidance in the developing nervous system. Regulates the migration of sympathetic neurons, but not of neural crest precursors. Required for normal dendrite spine morphology in pyramidal neurons. May play a role in regulating semaphorin-mediated programmed cell death in the developing nervous system. Class 3 semaphorins bind to a complex composed of a neuropilin and a plexin. The plexin modulates the affinity of the complex for specific semaphorins, and its cytoplasmic domain is required for the activation of down-stream signaling events in the cytoplasm. This Mus musculus (Mouse) protein is Plexin-A3 (Plxna3).